The following is a 412-amino-acid chain: Glucose-1-phosphate adenylyltransferase (412 aa).

Alpha-D-glucose 1-phosphate contacts are provided by residues Gly163, 179–180 (EK), and Ser197.

It belongs to the bacterial/plant glucose-1-phosphate adenylyltransferase family. As to quaternary structure, homotetramer.

It carries out the reaction alpha-D-glucose 1-phosphate + ATP + H(+) = ADP-alpha-D-glucose + diphosphate. It participates in glycan biosynthesis; glycogen biosynthesis. Involved in the biosynthesis of ADP-glucose, a building block required for the elongation reactions to produce glycogen. Catalyzes the reaction between ATP and alpha-D-glucose 1-phosphate (G1P) to produce pyrophosphate and ADP-Glc. The chain is Glucose-1-phosphate adenylyltransferase from Frankia casuarinae (strain DSM 45818 / CECT 9043 / HFP020203 / CcI3).